Reading from the N-terminus, the 412-residue chain is Probable tRNA sulfurtransferase (412 aa).

The disordered stretch occupies residues 1 to 22; the sequence is MPDIFTDNTDKQDSDPSRQGFE. The region spanning 82 to 190 is the THUMP domain; the sequence is PRAAEAAADV…QNLAYVYLET (109 aa). Residues 208 to 209, lysine 292, glycine 314, and glutamine 323 contribute to the ATP site; that span reads LM.

Belongs to the ThiI family.

The protein resides in the cytoplasm. It catalyses the reaction [ThiI sulfur-carrier protein]-S-sulfanyl-L-cysteine + a uridine in tRNA + 2 reduced [2Fe-2S]-[ferredoxin] + ATP + H(+) = [ThiI sulfur-carrier protein]-L-cysteine + a 4-thiouridine in tRNA + 2 oxidized [2Fe-2S]-[ferredoxin] + AMP + diphosphate. The catalysed reaction is [ThiS sulfur-carrier protein]-C-terminal Gly-Gly-AMP + S-sulfanyl-L-cysteinyl-[cysteine desulfurase] + AH2 = [ThiS sulfur-carrier protein]-C-terminal-Gly-aminoethanethioate + L-cysteinyl-[cysteine desulfurase] + A + AMP + 2 H(+). It participates in cofactor biosynthesis; thiamine diphosphate biosynthesis. Functionally, catalyzes the ATP-dependent transfer of a sulfur to tRNA to produce 4-thiouridine in position 8 of tRNAs, which functions as a near-UV photosensor. Also catalyzes the transfer of sulfur to the sulfur carrier protein ThiS, forming ThiS-thiocarboxylate. This is a step in the synthesis of thiazole, in the thiamine biosynthesis pathway. The sulfur is donated as persulfide by IscS. This chain is Probable tRNA sulfurtransferase, found in Methanosarcina acetivorans (strain ATCC 35395 / DSM 2834 / JCM 12185 / C2A).